Here is a 524-residue protein sequence, read N- to C-terminus: Probable cytochrome P450 12c1, mitochondrial (524 aa).

Cys-470 is a heme binding site.

The protein belongs to the cytochrome P450 family. Requires heme as cofactor.

The protein resides in the mitochondrion membrane. The polypeptide is Probable cytochrome P450 12c1, mitochondrial (Cyp12c1) (Drosophila melanogaster (Fruit fly)).